The chain runs to 122 residues: Large ribosomal subunit protein uL14 (122 aa).

It belongs to the universal ribosomal protein uL14 family. Part of the 50S ribosomal subunit. Forms a cluster with proteins L3 and L19. In the 70S ribosome, L14 and L19 interact and together make contacts with the 16S rRNA in bridges B5 and B8.

Binds to 23S rRNA. Forms part of two intersubunit bridges in the 70S ribosome. The protein is Large ribosomal subunit protein uL14 of Petrotoga mobilis (strain DSM 10674 / SJ95).